Here is a 714-residue protein sequence, read N- to C-terminus: Fatty acid oxidation complex subunit alpha (714 aa).

The interval 1–190 is enoyl-CoA hydratase; that stretch reads MEMASAFTLN…KLGLVDDVVP (190 aa). A 3-hydroxyacyl-CoA dehydrogenase region spans residues 306-714; the sequence is APLNSVGILG…FWKTTATDLQ (409 aa).

This sequence in the N-terminal section; belongs to the enoyl-CoA hydratase/isomerase family. In the central section; belongs to the 3-hydroxyacyl-CoA dehydrogenase family. Heterotetramer of two alpha chains (FadJ) and two beta chains (FadI).

The protein localises to the cytoplasm. The enzyme catalyses a (3S)-3-hydroxyacyl-CoA = a (2E)-enoyl-CoA + H2O. It carries out the reaction a 4-saturated-(3S)-3-hydroxyacyl-CoA = a (3E)-enoyl-CoA + H2O. It catalyses the reaction a (3S)-3-hydroxyacyl-CoA + NAD(+) = a 3-oxoacyl-CoA + NADH + H(+). The catalysed reaction is (3S)-3-hydroxybutanoyl-CoA = (3R)-3-hydroxybutanoyl-CoA. It functions in the pathway lipid metabolism; fatty acid beta-oxidation. Functionally, catalyzes the formation of a hydroxyacyl-CoA by addition of water on enoyl-CoA. Also exhibits 3-hydroxyacyl-CoA epimerase and 3-hydroxyacyl-CoA dehydrogenase activities. In Shigella boydii serotype 4 (strain Sb227), this protein is Fatty acid oxidation complex subunit alpha.